The primary structure comprises 938 residues: Leucine--tRNA ligase 1 (938 aa).

A 'HIGH' region motif is present at residues Pro-40–His-50. The short motif at Lys-620–Ser-624 is the 'KMSKS' region element. Lys-623 provides a ligand contact to ATP.

It belongs to the class-I aminoacyl-tRNA synthetase family.

It localises to the cytoplasm. It carries out the reaction tRNA(Leu) + L-leucine + ATP = L-leucyl-tRNA(Leu) + AMP + diphosphate. This chain is Leucine--tRNA ligase 1, found in Metallosphaera sedula (strain ATCC 51363 / DSM 5348 / JCM 9185 / NBRC 15509 / TH2).